We begin with the raw amino-acid sequence, 169 residues long: Peptide deformylase (169 aa).

Residues Cys91 and His133 each coordinate Fe cation. Glu134 is an active-site residue. His137 provides a ligand contact to Fe cation.

This sequence belongs to the polypeptide deformylase family. It depends on Fe(2+) as a cofactor.

The enzyme catalyses N-terminal N-formyl-L-methionyl-[peptide] + H2O = N-terminal L-methionyl-[peptide] + formate. Removes the formyl group from the N-terminal Met of newly synthesized proteins. Requires at least a dipeptide for an efficient rate of reaction. N-terminal L-methionine is a prerequisite for activity but the enzyme has broad specificity at other positions. This is Peptide deformylase from Hydrogenovibrio crunogenus (strain DSM 25203 / XCL-2) (Thiomicrospira crunogena).